Consider the following 347-residue polypeptide: tRNA N6-adenosine threonylcarbamoyltransferase (347 aa).

The Fe cation site is built by H115 and H119. Residues 137–141 (LASGG), D170, G183, and N281 contribute to the substrate site. D309 contacts Fe cation.

Belongs to the KAE1 / TsaD family. Fe(2+) serves as cofactor.

The protein resides in the cytoplasm. The catalysed reaction is L-threonylcarbamoyladenylate + adenosine(37) in tRNA = N(6)-L-threonylcarbamoyladenosine(37) in tRNA + AMP + H(+). Functionally, required for the formation of a threonylcarbamoyl group on adenosine at position 37 (t(6)A37) in tRNAs that read codons beginning with adenine. Is involved in the transfer of the threonylcarbamoyl moiety of threonylcarbamoyl-AMP (TC-AMP) to the N6 group of A37, together with TsaE and TsaB. TsaD likely plays a direct catalytic role in this reaction. This is tRNA N6-adenosine threonylcarbamoyltransferase from Methylorubrum populi (strain ATCC BAA-705 / NCIMB 13946 / BJ001) (Methylobacterium populi).